The sequence spans 395 residues: S-adenosylmethionine synthase (395 aa).

Residue His-15 coordinates ATP. Asp-17 contributes to the Mg(2+) binding site. Glu-43 contributes to the K(+) binding site. Residues Glu-56 and Gln-99 each coordinate L-methionine. The interval 99-109 (QSADIALGVDE) is flexible loop. Residues 174–176 (DGK), 240–241 (RF), Asp-249, 255–256 (RK), Ala-272, and Lys-276 each bind ATP. Asp-249 is an L-methionine binding site. An L-methionine-binding site is contributed by Lys-280.

This sequence belongs to the AdoMet synthase family. As to quaternary structure, homotetramer; dimer of dimers. Mg(2+) serves as cofactor. It depends on K(+) as a cofactor.

Its subcellular location is the cytoplasm. It catalyses the reaction L-methionine + ATP + H2O = S-adenosyl-L-methionine + phosphate + diphosphate. It functions in the pathway amino-acid biosynthesis; S-adenosyl-L-methionine biosynthesis; S-adenosyl-L-methionine from L-methionine: step 1/1. Catalyzes the formation of S-adenosylmethionine (AdoMet) from methionine and ATP. The overall synthetic reaction is composed of two sequential steps, AdoMet formation and the subsequent tripolyphosphate hydrolysis which occurs prior to release of AdoMet from the enzyme. In Alkaliphilus oremlandii (strain OhILAs) (Clostridium oremlandii (strain OhILAs)), this protein is S-adenosylmethionine synthase.